The primary structure comprises 545 residues: Methionine--tRNA ligase (545 aa).

A 'HIGH' region motif is present at residues 13 to 23 (PYANGEIHLGH). 4 residues coordinate Zn(2+): Cys-144, Cys-147, Cys-157, and Cys-160. The 'KMSKS' region signature appears at 329–333 (KMSKS). Residue Lys-332 participates in ATP binding.

Belongs to the class-I aminoacyl-tRNA synthetase family. MetG type 1 subfamily. As to quaternary structure, monomer. Requires Zn(2+) as cofactor.

It is found in the cytoplasm. It catalyses the reaction tRNA(Met) + L-methionine + ATP = L-methionyl-tRNA(Met) + AMP + diphosphate. Is required not only for elongation of protein synthesis but also for the initiation of all mRNA translation through initiator tRNA(fMet) aminoacylation. In Vesicomyosocius okutanii subsp. Calyptogena okutanii (strain HA), this protein is Methionine--tRNA ligase.